A 252-amino-acid chain; its full sequence is Cell division protein ZapD (252 aa).

It belongs to the ZapD family. Interacts with FtsZ.

The protein localises to the cytoplasm. Cell division factor that enhances FtsZ-ring assembly. Directly interacts with FtsZ and promotes bundling of FtsZ protofilaments, with a reduction in FtsZ GTPase activity. The protein is Cell division protein ZapD of Cupriavidus metallidurans (strain ATCC 43123 / DSM 2839 / NBRC 102507 / CH34) (Ralstonia metallidurans).